Here is a 329-residue protein sequence, read N- to C-terminus: Diaminopimelate epimerase (329 aa).

The substrate site is built by Asn14 and Asn73. Residue Cys82 is the Proton donor of the active site. Substrate is bound by residues 83-84 (GN), Asn170, Asn206, and 224-225 (ER). Cys233 (proton acceptor) is an active-site residue. Position 234 to 235 (234 to 235 (GT)) interacts with substrate.

It belongs to the diaminopimelate epimerase family. In terms of assembly, homodimer.

Its subcellular location is the cytoplasm. It catalyses the reaction (2S,6S)-2,6-diaminopimelate = meso-2,6-diaminopimelate. It participates in amino-acid biosynthesis; L-lysine biosynthesis via DAP pathway; DL-2,6-diaminopimelate from LL-2,6-diaminopimelate: step 1/1. Its function is as follows. Catalyzes the stereoinversion of LL-2,6-diaminopimelate (L,L-DAP) to meso-diaminopimelate (meso-DAP), a precursor of L-lysine and an essential component of the bacterial peptidoglycan. This is Diaminopimelate epimerase from Listeria monocytogenes serotype 4b (strain CLIP80459).